Consider the following 492-residue polypeptide: Thyroid hormone receptor alpha (492 aa).

Residues 1–33 (MEQKPSKVECGSDPEENSARSPDGKRKRKNGQC) form a disordered region. The segment at 1–52 (MEQKPSKVECGSDPEENSARSPDGKRKRKNGQCPLKSSMSGYIPSYLDKDEQ) is modulating. Cys53, Cys56, Cys70, Cys73, Cys91, Cys97, Cys107, and Cys110 together coordinate Zn(2+). 2 NR C4-type zinc fingers span residues 53 to 73 (CVVC…CEGC) and 91 to 115 (CKYD…FKKC). Positions 53 to 127 (CVVCGDKATG…VGMAMDLVLD (75 aa)) form a DNA-binding region, nuclear receptor. In terms of domain architecture, NR LBD spans 163–407 (EEWDLIHVAT…EGQQLLGMHV (245 aa)). Positions 228 and 277 each coordinate 3,3',5-triiodo-L-thyronine. A disordered region spans residues 457–492 (AVCGEDDSSEASSLSSSSSDEDTEVFEDLAGKAASP).

Belongs to the nuclear hormone receptor family. NR1 subfamily. As to quaternary structure, binds DNA as a dimer; homodimer and heterodimer with RXRB. Interacts with NCOA3 and NCOA6 coactivators, leading to a strong increase of transcription of target genes. Probably interacts with SFPQ. Interacts with C1D. Interacts with AKAP13. Interacts with TP53INP2. Interacts with PER2. Isoform alpha-2 and isoform alpha-1 interact with TACC1, but the interaction with alpha-1 is weaker. The interaction with isoform alpha-1, but not alpha-2, is decreased in the presence of thyroid hormone T3.

Its subcellular location is the nucleus. The protein localises to the cytoplasm. Nuclear hormone receptor that can act as a repressor or activator of transcription. High affinity receptor for thyroid hormones, including triiodothyronine and thyroxine. This Rattus norvegicus (Rat) protein is Thyroid hormone receptor alpha (Thra).